Here is a 193-residue protein sequence, read N- to C-terminus: Adenine phosphoribosyltransferase (193 aa).

It belongs to the purine/pyrimidine phosphoribosyltransferase family. As to quaternary structure, homodimer.

The protein resides in the cytoplasm. The catalysed reaction is AMP + diphosphate = 5-phospho-alpha-D-ribose 1-diphosphate + adenine. The protein operates within purine metabolism; AMP biosynthesis via salvage pathway; AMP from adenine: step 1/1. Its function is as follows. Catalyzes a salvage reaction resulting in the formation of AMP, that is energically less costly than de novo synthesis. In Chromobacterium violaceum (strain ATCC 12472 / DSM 30191 / JCM 1249 / CCUG 213 / NBRC 12614 / NCIMB 9131 / NCTC 9757 / MK), this protein is Adenine phosphoribosyltransferase.